The sequence spans 200 residues: DNA-binding protein HupB (200 aa).

Residues 1–90 (MNKAELIDVL…PGAQFKAVVA (90 aa)) form a bacterial histone-like domain region. Residues Lys3, Lys72, Lys86, Lys103, Lys137, Lys144, and Lys156 each carry the N6-acetyllysine modification. Positions 101 to 200 (AVKRGVATSA…KVTAAKRGRK (100 aa)) are degenerate repeats region. The interval 179–200 (AKKAAVKKAPAKKVTAAKRGRK) is disordered.

This sequence belongs to the bacterial histone-like protein family. Long actinobacterial subfamily. Binds to human laminin-2. May also be methylated and possibly phosphorylated in vivo.

It localises to the cytoplasm. Its subcellular location is the nucleoid. The protein resides in the secreted. The protein localises to the cell wall. It is found in the cell surface. It carries out the reaction 4 Fe(2+) + O2 + 4 H(+) = 4 Fe(3+) + 2 H2O. Functionally, a nucleoid-associated protein (NAP) that plays a role in local chromosome architecture and chromosome compactation. Required for biofilm formation, stress survival and possibly in cell wall assembly, probably influences transcription. RNase E and HupB jointly contribute to cellular adaptation to changing growth conditions and survival during antibiotic treatment and in the host. In terms of biological role, binds Fe(3+) but not Fe(2+). Has ferroxidase activity, converts Fe(2+) into Fe(3+) and in the presence of H(2)O(2) prevents the generation of hydroxyl radicals (the Fenton reaction). Protects DNA from damage in the presence of FeSO(4) and H(2)O(2). May function in iron storage. Its function is as follows. May be involved in entry into human Schwann cells. The sequence is that of DNA-binding protein HupB from Mycobacterium leprae (strain TN).